We begin with the raw amino-acid sequence, 288 residues long: NAD(P)H-hydrate epimerase (288 aa).

Residues 1–47 (MSRLRALLGLGLLVAGSRVPRIKSQTIACRSGPTWWGPQRLNSGGRW) constitute a mitochondrion transit peptide. A Phosphoserine modification is found at S49. Residues 65-275 (AQAVDQELFN…ALEKKYQLNL (211 aa)) enclose the YjeF N-terminal domain. 119–123 (NNGGD) provides a ligand contact to (6S)-NADPHX. N120 provides a ligand contact to K(+). K144 carries the post-translational modification N6-succinyllysine. Residue D185 coordinates K(+). Residues 189–195 (GFSFKGD) and D218 each bind (6S)-NADPHX. S221 provides a ligand contact to K(+).

This sequence belongs to the NnrE/AIBP family. As to quaternary structure, homodimer. Interacts with APOA1 and APOA2. Requires K(+) as cofactor. Undergoes physiological phosphorylation during sperm capacitation, downstream to PKA activation. In terms of tissue distribution, ubiquitously expressed, with highest levels in kidney, heart and liver. Present in cerebrospinal fluid and urine but not in serum from healthy patients. Present in serum of sepsis patients (at protein level).

The protein localises to the mitochondrion. The protein resides in the secreted. It catalyses the reaction (6R)-NADHX = (6S)-NADHX. It carries out the reaction (6R)-NADPHX = (6S)-NADPHX. In terms of biological role, catalyzes the epimerization of the S- and R-forms of NAD(P)HX, a damaged form of NAD(P)H that is a result of enzymatic or heat-dependent hydration. This is a prerequisite for the S-specific NAD(P)H-hydrate dehydratase to allow the repair of both epimers of NAD(P)HX. Accelerates cholesterol efflux from endothelial cells to high-density lipoprotein (HDL) and thereby regulates angiogenesis. In Homo sapiens (Human), this protein is NAD(P)H-hydrate epimerase.